The primary structure comprises 346 residues: L-glyceraldehyde 3-phosphate reductase (346 aa).

12 residues coordinate NADP(+): W33, D61, Y66, S168, Q193, T223, L225, Q227, K233, S303, Q307, and N311.

It belongs to the shaker potassium channel beta subunit family.

The enzyme catalyses a primary alcohol + NADP(+) = an aldehyde + NADPH + H(+). Aldo-keto reductase that catalyzes the stereospecific, NADPH-dependent reduction of L-glyceraldehyde 3-phosphate (L-GAP) to L-glycerol 3-phosphate (L-G3P). The chain is L-glyceraldehyde 3-phosphate reductase from Escherichia coli O157:H7.